The chain runs to 121 residues: UPF0145 protein SGR_4080 (121 aa).

It belongs to the UPF0145 family.

The polypeptide is UPF0145 protein SGR_4080 (Streptomyces griseus subsp. griseus (strain JCM 4626 / CBS 651.72 / NBRC 13350 / KCC S-0626 / ISP 5235)).